A 259-amino-acid chain; its full sequence is Eukaryotic translation initiation factor 3 subunit G-2 (259 aa).

Positions 179 to 257 (SAVRISNLSE…LILSVEWSKP (79 aa)) constitute an RRM domain.

This sequence belongs to the eIF-3 subunit G family. Component of the eukaryotic translation initiation factor 3 (eIF-3) complex. The eIF-3 complex interacts with pix.

The protein resides in the cytoplasm. Its function is as follows. RNA-binding component of the eukaryotic translation initiation factor 3 (eIF-3) complex, which is involved in protein synthesis of a specialized repertoire of mRNAs and, together with other initiation factors, stimulates binding of mRNA and methionyl-tRNAi to the 40S ribosome. The eIF-3 complex specifically targets and initiates translation of a subset of mRNAs involved in cell proliferation. This subunit can bind 18S rRNA. The protein is Eukaryotic translation initiation factor 3 subunit G-2 of Drosophila mojavensis (Fruit fly).